We begin with the raw amino-acid sequence, 793 residues long: Splicing factor 3A subunit 1 (793 aa).

The tract at residues 1-42 (MPAGPVQAVPPPPPAATEPKQPTEEEASSKEDSTPSKPVVGI) is disordered. Lys-20 is covalently cross-linked (Glycyl lysine isopeptide (Lys-Gly) (interchain with G-Cter in SUMO2)). The segment covering 21–34 (QPTEEEASSKEDST) has biased composition (basic and acidic residues). The stretch at 52–94 (IVDKTASFVARNGPEFEARIRQNEINNPKFNFLNPNDPYHAYY) is one SURP motif 1 repeat. Lys-55 bears the N6-acetyllysine mark. Lys-131 is covalently cross-linked (Glycyl lysine isopeptide (Lys-Gly) (interchain with G-Cter in SUMO2)). The stretch at 166–208 (VVKLTAQFVARNGRQFLTQLMQKEQRNYQFDFLRPQHSLFNYF) is one SURP motif 2 repeat. The disordered stretch occupies residues 318–412 (GESEEVEMEV…PAPAPDEYLV (95 aa)). Ser-320, Ser-329, and Ser-359 each carry phosphoserine. Acidic residues-rich tracts occupy residues 320 to 334 (SEEVEMEVESDEEDE) and 354 to 364 (DMDEGSDDEEE). Residues 368–384 (VPPPPETPMPPPLPPTP) are compositionally biased toward pro residues. Residues 388-397 (IVRKDYDPKA) show a composition bias toward basic and acidic residues. Ser-413 carries the post-translational modification Phosphoserine. Lys-424 participates in a covalent cross-link: Glycyl lysine isopeptide (Lys-Gly) (interchain with G-Cter in SUMO2). Ser-451 bears the Phosphoserine mark. Position 456 is a phosphotyrosine (Tyr-456). Basic and acidic residues predominate over residues 488 to 502 (IGEEEIQKPEEKVTW). 3 disordered regions span residues 488–518 (IGEEEIQKPEEKVTWDGHSGSMARTQQAAQA), 530–584 (HKAK…AMPP), and 666–685 (PMPPVHPPPPMEDEPASKKL). Lys-499 is covalently cross-linked (Glycyl lysine isopeptide (Lys-Gly) (interchain with G-Cter in SUMO2)). At Ser-508 the chain carries Phosphoserine. Polar residues predominate over residues 509-518 (MARTQQAAQA). A Glycyl lysine isopeptide (Lys-Gly) (interchain with G-Cter in SUMO2) cross-link involves residue Lys-542. A compositionally biased stretch (polar residues) spans 563-572 (ATNIPSSAPP). The span at 666–675 (PMPPVHPPPP) shows a compositional bias: pro residues. Residues 680–702 (PASKKLKTEDSLMPEEEFLRRNK) are required and sufficient for nuclear import. Lys-686 participates in a covalent cross-link: Glycyl lysine isopeptide (Lys-Gly) (interchain with G-Cter in SUMO2). In terms of domain architecture, Ubiquitin-like spans 707-793 (IKVQVPNMQD…ALKERGGRKK (87 aa)). Tyr-759 bears the Phosphotyrosine mark.

Component of the 17S U2 SnRNP complex, a ribonucleoprotein complex that contains small nuclear RNA (snRNA) U2 and a number of specific proteins. Part of the SF3A subcomplex of the 17S U2 SnRNP complex which is composed of three subunits; SF3A3/SAP61, SF3A2/SAP62 and SF3A1/SAP114. SF3A associates with the splicing factor SF3B and a 12S RNA unit to form the mature 17S U2 small nuclear ribonucleoprotein complex (17S U2 snRNP). SF3A1 functions as a scaffold that interacts directly with both SF3A2 and SF3A3. Identified in the spliceosome 'E' complex, a precursor of the spliceosome 'A' complex. Identified in the spliceosome 'A' and 'B' complexes. Identified in the spliceosome 'C' complex. Interacts with P2RX6; resulting in a reduction of the splicing activity.

The protein localises to the nucleus. It localises to the nucleus speckle. Its function is as follows. Component of the 17S U2 SnRNP complex of the spliceosome, a large ribonucleoprotein complex that removes introns from transcribed pre-mRNAs. The 17S U2 SnRNP complex (1) directly participates in early spliceosome assembly and (2) mediates recognition of the intron branch site during pre-mRNA splicing by promoting the selection of the pre-mRNA branch-site adenosine, the nucleophile for the first step of splicing. Within the 17S U2 SnRNP complex, SF3A1 is part of the SF3A subcomplex that contributes to the assembly of the 17S U2 snRNP, and the subsequent assembly of the pre-spliceosome 'E' complex and the pre-catalytic spliceosome 'A' complex. Involved in pre-mRNA splicing as a component of pre-catalytic spliceosome 'B' complexes. This chain is Splicing factor 3A subunit 1 (SF3A1), found in Bos taurus (Bovine).